The primary structure comprises 240 residues: UDP-2,3-diacylglucosamine hydrolase (240 aa).

D9, H11, D43, N81, and H116 together coordinate Mn(2+). 81–82 (NR) lines the substrate pocket. D124, S162, K166, K169, and H197 together coordinate substrate. Mn(2+)-binding residues include H197 and H199.

Belongs to the LpxH family. It depends on Mn(2+) as a cofactor.

The protein localises to the cell inner membrane. The catalysed reaction is UDP-2-N,3-O-bis[(3R)-3-hydroxytetradecanoyl]-alpha-D-glucosamine + H2O = 2-N,3-O-bis[(3R)-3-hydroxytetradecanoyl]-alpha-D-glucosaminyl 1-phosphate + UMP + 2 H(+). It functions in the pathway glycolipid biosynthesis; lipid IV(A) biosynthesis; lipid IV(A) from (3R)-3-hydroxytetradecanoyl-[acyl-carrier-protein] and UDP-N-acetyl-alpha-D-glucosamine: step 4/6. In terms of biological role, hydrolyzes the pyrophosphate bond of UDP-2,3-diacylglucosamine to yield 2,3-diacylglucosamine 1-phosphate (lipid X) and UMP by catalyzing the attack of water at the alpha-P atom. Involved in the biosynthesis of lipid A, a phosphorylated glycolipid that anchors the lipopolysaccharide to the outer membrane of the cell. This chain is UDP-2,3-diacylglucosamine hydrolase, found in Neisseria gonorrhoeae (strain ATCC 700825 / FA 1090).